A 125-amino-acid chain; its full sequence is Small ribosomal subunit protein bS6m (125 aa).

It belongs to the bacterial ribosomal protein bS6 family. Component of the mitochondrial ribosome small subunit (28S) which comprises a 12S rRNA and about 30 distinct proteins.

It localises to the mitochondrion. In Mus musculus (Mouse), this protein is Small ribosomal subunit protein bS6m (Mrps6).